Reading from the N-terminus, the 423-residue chain is Glucose-1-phosphate adenylyltransferase (423 aa).

Residues Tyr108, Gly173, 188–189 (EK), and Ser207 contribute to the alpha-D-glucose 1-phosphate site.

It belongs to the bacterial/plant glucose-1-phosphate adenylyltransferase family. In terms of assembly, homotetramer.

It carries out the reaction alpha-D-glucose 1-phosphate + ATP + H(+) = ADP-alpha-D-glucose + diphosphate. The protein operates within glycan biosynthesis; glycogen biosynthesis. In terms of biological role, involved in the biosynthesis of ADP-glucose, a building block required for the elongation reactions to produce glycogen. Catalyzes the reaction between ATP and alpha-D-glucose 1-phosphate (G1P) to produce pyrophosphate and ADP-Glc. The chain is Glucose-1-phosphate adenylyltransferase from Francisella tularensis subsp. mediasiatica (strain FSC147).